Reading from the N-terminus, the 547-residue chain is Threonylcarbamoyladenosine tRNA methylthiotransferase (547 aa).

Residues 30–51 are disordered; it reads ARKSVVPRARKHKQETGEQMQT. The MTTase N-terminal domain maps to 59–167; it reads QKVWLKTWGC…VVEVVDEAIK (109 aa). Residues C68, C104, C133, C209, C213, and C216 each contribute to the [4Fe-4S] cluster site. Positions 195-426 constitute a Radical SAM core domain; that stretch reads RKNPLIEIIS…ALFHSYRPYD (232 aa). Residues 426 to 488 form the TRAM domain; that stretch reads DHKMGEQQQV…KHYMKGRPLE (63 aa). Residues 527-547 traverse the membrane as a helical segment; the sequence is ILAVVLLLSAVLLALLMEKLL.

It belongs to the methylthiotransferase family. CDKAL1 subfamily. It depends on [4Fe-4S] cluster as a cofactor.

It localises to the endoplasmic reticulum membrane. The enzyme catalyses N(6)-L-threonylcarbamoyladenosine(37) in tRNA + (sulfur carrier)-SH + AH2 + 2 S-adenosyl-L-methionine = 2-methylsulfanyl-N(6)-L-threonylcarbamoyladenosine(37) in tRNA + (sulfur carrier)-H + 5'-deoxyadenosine + L-methionine + A + S-adenosyl-L-homocysteine + 2 H(+). In terms of biological role, catalyzes the methylthiolation of N6-threonylcarbamoyladenosine (t(6)A), leading to the formation of 2-methylthio-N6-threonylcarbamoyladenosine (ms(2)t(6)A) at position 37 in tRNAs that read codons beginning with adenine. The sequence is that of Threonylcarbamoyladenosine tRNA methylthiotransferase (cdkal1) from Danio rerio (Zebrafish).